The following is a 153-amino-acid chain: Ribosome maturation factor RimP (153 aa).

Belongs to the RimP family.

The protein resides in the cytoplasm. Functionally, required for maturation of 30S ribosomal subunits. In Nostoc sp. (strain PCC 7120 / SAG 25.82 / UTEX 2576), this protein is Ribosome maturation factor RimP.